The primary structure comprises 604 residues: Sulfite reductase [NADPH] flavoprotein alpha-component (604 aa).

The Flavodoxin-like domain maps to Val-66–Ala-204. FMN is bound by residues Ser-72–Ala-77, Ser-119–Gly-122, and Leu-155–Cys-164. The 215-residue stretch at Ala-239 to Pro-453 folds into the FAD-binding FR-type domain. Residues Thr-327, Gln-361, Arg-391–Ser-394, Thr-409–Gly-411, and Gly-424–Ser-427 contribute to the FAD site. NADP(+)-binding positions include Ser-524–Arg-525, Lys-530–Gln-534, and Asp-566. Position 604 (Tyr-604) interacts with FAD.

This sequence belongs to the NADPH-dependent sulphite reductase flavoprotein subunit CysJ family. It in the N-terminal section; belongs to the flavodoxin family. In the C-terminal section; belongs to the flavoprotein pyridine nucleotide cytochrome reductase family. Alpha(8)-beta(8). The alpha component is a flavoprotein, the beta component is a hemoprotein. The cofactor is FAD. FMN is required as a cofactor.

The enzyme catalyses hydrogen sulfide + 3 NADP(+) + 3 H2O = sulfite + 3 NADPH + 4 H(+). It participates in sulfur metabolism; hydrogen sulfide biosynthesis; hydrogen sulfide from sulfite (NADPH route): step 1/1. Its function is as follows. Component of the sulfite reductase complex that catalyzes the 6-electron reduction of sulfite to sulfide. This is one of several activities required for the biosynthesis of L-cysteine from sulfate. The flavoprotein component catalyzes the electron flow from NADPH -&gt; FAD -&gt; FMN to the hemoprotein component. The protein is Sulfite reductase [NADPH] flavoprotein alpha-component of Neisseria meningitidis serogroup B (strain ATCC BAA-335 / MC58).